The sequence spans 438 residues: Methylenetetrahydrofolate--tRNA-(uracil-5-)-methyltransferase TrmFO (438 aa).

Residue 9–14 participates in FAD binding; it reads GGGLAG.

Belongs to the MnmG family. TrmFO subfamily. The cofactor is FAD.

The protein localises to the cytoplasm. The enzyme catalyses uridine(54) in tRNA + (6R)-5,10-methylene-5,6,7,8-tetrahydrofolate + NADH + H(+) = 5-methyluridine(54) in tRNA + (6S)-5,6,7,8-tetrahydrofolate + NAD(+). It catalyses the reaction uridine(54) in tRNA + (6R)-5,10-methylene-5,6,7,8-tetrahydrofolate + NADPH + H(+) = 5-methyluridine(54) in tRNA + (6S)-5,6,7,8-tetrahydrofolate + NADP(+). Catalyzes the folate-dependent formation of 5-methyl-uridine at position 54 (M-5-U54) in all tRNAs. This chain is Methylenetetrahydrofolate--tRNA-(uracil-5-)-methyltransferase TrmFO, found in Lactobacillus johnsonii (strain CNCM I-12250 / La1 / NCC 533).